The primary structure comprises 75 residues: YTLLCYKTPIPINAETCPPGENLCYTKMWCDIWCSSRGKVVELGCAATCPSKKPYEEVTCCSTDKCNPHPKQRPD.

The first 2 residues, 1 to 2 (YT), serve as a signal peptide directing secretion. 5 disulfides stabilise this stretch: Cys5-Cys24, Cys17-Cys45, Cys30-Cys34, Cys49-Cys60, and Cys61-Cys66.

Monomer in solution, homodimer in crystal state. Expressed by the venom gland.

It is found in the secreted. Binds to muscular and neuronal nicotinic acetylcholine receptor (nAChR) and inhibits acetylcholine from binding to the receptor, thereby impairing neuromuscular and neuronal transmission. Blocks muscle type nAChR. Also binds with high affinity to alpha-7/CHRNA7 nAChRs. In addition, shows a weak inhibition of neuronal alpha-3-beta-2/CHRNA3-CHRNB2 nAChR. Selectively binds to alpha-1-delta subunit interface of the mouse muscle nicotinic acetylcholine receptor, with a 10-fold higher affinity for the adult than for the fetal receptors. In vivo, when intraperitoneally injected into mice, causes flaccid paralysis and respiratory distress, followed by death within 2-4 hours. In Bungarus candidus (Malayan krait), this protein is Alpha-elapitoxin-Bc2b.